The sequence spans 258 residues: MNIVNDIASSKIQVHNLNFYYGKFHALKNITLNIAKNKVTAFIGPSGCGKSTLLRTFNKMYELYGEQRAEGKILLDGKNILTDKQDVALLRANVGMVFQKPTPFPMSIYDNIAFGVRLFEKLSRAEMDERVQWALTKAALWSETRDKLYQSGYSLSGGQQQRLCIARGIAIRPEVLLLDEPCSALDPISTGRIEELISELKSEYTVVIVTHNMQQAARCSDHTAFMYLGELIEFSDTDTLFTTPKMKQTEDYITGRYG.

An ABC transporter domain is found at 12–253; that stretch reads IQVHNLNFYY…PKMKQTEDYI (242 aa). Position 44 to 51 (44 to 51) interacts with ATP; that stretch reads GPSGCGKS.

It belongs to the ABC transporter superfamily. Phosphate importer (TC 3.A.1.7) family. As to quaternary structure, the complex is composed of two ATP-binding proteins (PstB), two transmembrane proteins (PstC and PstA) and a solute-binding protein (PstS).

Its subcellular location is the cell inner membrane. It carries out the reaction phosphate(out) + ATP + H2O = ADP + 2 phosphate(in) + H(+). Its function is as follows. Part of the ABC transporter complex PstSACB involved in phosphate import. Responsible for energy coupling to the transport system. The protein is Phosphate import ATP-binding protein PstB of Photorhabdus laumondii subsp. laumondii (strain DSM 15139 / CIP 105565 / TT01) (Photorhabdus luminescens subsp. laumondii).